We begin with the raw amino-acid sequence, 344 residues long: Selenide, water dikinase (344 aa).

C16 is an active-site residue. ATP-binding positions include K19 and 47 to 49 (SRD). Residue D50 participates in Mg(2+) binding. Residues D67, D90, and 138-140 (GHS) each bind ATP. Position 90 (D90) interacts with Mg(2+). Residue D226 coordinates Mg(2+).

Belongs to the selenophosphate synthase 1 family. Class I subfamily. As to quaternary structure, homodimer. It depends on Mg(2+) as a cofactor.

The enzyme catalyses hydrogenselenide + ATP + H2O = selenophosphate + AMP + phosphate + 2 H(+). In terms of biological role, synthesizes selenophosphate from selenide and ATP. The protein is Selenide, water dikinase of Pseudomonas putida (strain ATCC 47054 / DSM 6125 / CFBP 8728 / NCIMB 11950 / KT2440).